The primary structure comprises 128 residues: Ribosome-binding factor A (128 aa).

This sequence belongs to the RbfA family. In terms of assembly, monomer. Binds 30S ribosomal subunits, but not 50S ribosomal subunits or 70S ribosomes.

It localises to the cytoplasm. In terms of biological role, one of several proteins that assist in the late maturation steps of the functional core of the 30S ribosomal subunit. Associates with free 30S ribosomal subunits (but not with 30S subunits that are part of 70S ribosomes or polysomes). Required for efficient processing of 16S rRNA. May interact with the 5'-terminal helix region of 16S rRNA. The polypeptide is Ribosome-binding factor A (Herminiimonas arsenicoxydans).